We begin with the raw amino-acid sequence, 214 residues long: Orotate phosphoribosyltransferase (214 aa).

K26 contributes to the 5-phospho-alpha-D-ribose 1-diphosphate binding site. 34–35 (FF) is a binding site for orotate. 5-phospho-alpha-D-ribose 1-diphosphate is bound by residues 72–73 (YK), R99, K100, K103, H105, and 124–132 (DDVITAGTA). Orotate-binding residues include T128 and R156.

This sequence belongs to the purine/pyrimidine phosphoribosyltransferase family. PyrE subfamily. As to quaternary structure, homodimer. The cofactor is Mg(2+).

The catalysed reaction is orotidine 5'-phosphate + diphosphate = orotate + 5-phospho-alpha-D-ribose 1-diphosphate. The protein operates within pyrimidine metabolism; UMP biosynthesis via de novo pathway; UMP from orotate: step 1/2. Its function is as follows. Catalyzes the transfer of a ribosyl phosphate group from 5-phosphoribose 1-diphosphate to orotate, leading to the formation of orotidine monophosphate (OMP). In Pseudoalteromonas translucida (strain TAC 125), this protein is Orotate phosphoribosyltransferase.